The chain runs to 83 residues: RNA-binding protein Hfq (83 aa).

The Sm domain occupies 10 to 70 (DTFLNQVRKE…ISTVMPLRPI (61 aa)).

This sequence belongs to the Hfq family. Homohexamer.

RNA chaperone that binds small regulatory RNA (sRNAs) and mRNAs to facilitate mRNA translational regulation in response to envelope stress, environmental stress and changes in metabolite concentrations. Also binds with high specificity to tRNAs. This Desulfitobacterium hafniense (strain Y51) protein is RNA-binding protein Hfq.